Consider the following 624-residue polypeptide: Actin-related protein 8 (624 aa).

M1 is subject to N-acetylmethionine. Residues 1–25 (MTQAEKGDTENGKEKGGEKEKEQRG) show a composition bias toward basic and acidic residues. The segment at 1–29 (MTQAEKGDTENGKEKGGEKEKEQRGVKRP) is disordered. ATP contacts are provided by S55 and T56. S132 bears the Phosphoserine mark. 283–286 (DVGD) contributes to the ATP binding site. Phosphoserine is present on S412. A disordered region spans residues 430–462 (SKQEQSAKATADRKSASKPIGFEGDLRGQSSDL).

Belongs to the actin family. ARP8 subfamily. In terms of assembly, component of the chromatin remodeling INO80 complex; specifically part of a complex module associated with the DBINO domain of INO80. Interacts with ACTR5; the interaction is observed in asynchronous (interphase) cells but not in metaphase-arrested cells indicative for a possible dissociation of the INO80 complex in mitotic cells. Exists as monomers and dimers, but the dimer is most probably the biologically relevant form required for stable interactions with histones that exploits the twofold symmetry of the nucleosome core.

It is found in the nucleus. The protein localises to the chromosome. In terms of biological role, plays an important role in the functional organization of mitotic chromosomes. Exhibits low basal ATPase activity, and unable to polymerize. Its function is as follows. Proposed core component of the chromatin remodeling INO80 complex which is involved in transcriptional regulation, DNA replication and probably DNA repair. Required for the recruitment of INO80 (and probably the INO80 complex) to sites of DNA damage. Strongly prefer nucleosomes and H3-H4 tetramers over H2A-H2B dimers, suggesting it may act as a nucleosome recognition module within the complex. The sequence is that of Actin-related protein 8 (ACTR8) from Homo sapiens (Human).